The chain runs to 137 residues: MRHYEIVFLVHPDQSEQVPGMIERYTGILTQAGGQIHRLEDWGRRQLAYPIIELHKAHYVLMNVETTAEAVEELETAFRFNDAVLRSMVMRTKAAITEASPMAKAKDERDTRRSSEERAPRAEATEEAEESAENTAE.

Residues 96–137 (ITEASPMAKAKDERDTRRSSEERAPRAEATEEAEESAENTAE) form a disordered region. Residues 104–124 (KAKDERDTRRSSEERAPRAEA) are compositionally biased toward basic and acidic residues. The segment covering 125 to 137 (TEEAEESAENTAE) has biased composition (acidic residues).

It belongs to the bacterial ribosomal protein bS6 family.

In terms of biological role, binds together with bS18 to 16S ribosomal RNA. This is Small ribosomal subunit protein bS6 from Shewanella pealeana (strain ATCC 700345 / ANG-SQ1).